The primary structure comprises 526 residues: Variant surface glycoprotein MITAT 1.4A (526 aa).

A signal peptide spans M1–G33. Cystine bridges form between C47-C173 and C154-C215. The interval N157–A193 is disordered. An N-linked (GlcNAc...) asparagine glycan is attached at N453. The GPI-anchor amidated aspartate moiety is linked to residue D503. Positions S504 to F526 are cleaved as a propeptide — removed in mature form.

It localises to the cell membrane. Functionally, VSG forms a coat on the surface of the parasite. The trypanosome evades the immune response of the host by expressing a series of antigenically distinct VSGs from an estimated 1000 VSG genes. In Trypanosoma brucei brucei, this protein is Variant surface glycoprotein MITAT 1.4A.